Here is a 198-residue protein sequence, read N- to C-terminus: Pyridoxal 5'-phosphate synthase subunit PdxT (198 aa).

L-glutamine is bound at residue 52–54; sequence GES. The active-site Nucleophile is Cys-84. L-glutamine contacts are provided by residues Arg-116 and 143–144; that span reads IR. Residues His-179 and Glu-181 each act as charge relay system in the active site.

It belongs to the glutaminase PdxT/SNO family. As to quaternary structure, in the presence of PdxS, forms a dodecamer of heterodimers. Only shows activity in the heterodimer.

The enzyme catalyses aldehydo-D-ribose 5-phosphate + D-glyceraldehyde 3-phosphate + L-glutamine = pyridoxal 5'-phosphate + L-glutamate + phosphate + 3 H2O + H(+). The catalysed reaction is L-glutamine + H2O = L-glutamate + NH4(+). It participates in cofactor biosynthesis; pyridoxal 5'-phosphate biosynthesis. Catalyzes the hydrolysis of glutamine to glutamate and ammonia as part of the biosynthesis of pyridoxal 5'-phosphate. The resulting ammonia molecule is channeled to the active site of PdxS. This is Pyridoxal 5'-phosphate synthase subunit PdxT from Caldivirga maquilingensis (strain ATCC 700844 / DSM 13496 / JCM 10307 / IC-167).